A 434-amino-acid polypeptide reads, in one-letter code: Methylenetetrahydrofolate--tRNA-(uracil-5-)-methyltransferase TrmFO (434 aa).

Position 10–15 (10–15 (GAGLAG)) interacts with FAD.

This sequence belongs to the MnmG family. TrmFO subfamily. The cofactor is FAD.

It is found in the cytoplasm. The enzyme catalyses uridine(54) in tRNA + (6R)-5,10-methylene-5,6,7,8-tetrahydrofolate + NADH + H(+) = 5-methyluridine(54) in tRNA + (6S)-5,6,7,8-tetrahydrofolate + NAD(+). It catalyses the reaction uridine(54) in tRNA + (6R)-5,10-methylene-5,6,7,8-tetrahydrofolate + NADPH + H(+) = 5-methyluridine(54) in tRNA + (6S)-5,6,7,8-tetrahydrofolate + NADP(+). Functionally, catalyzes the folate-dependent formation of 5-methyl-uridine at position 54 (M-5-U54) in all tRNAs. This is Methylenetetrahydrofolate--tRNA-(uracil-5-)-methyltransferase TrmFO from Bacillus cereus (strain Q1).